Here is a 341-residue protein sequence, read N- to C-terminus: Phenylalanine--tRNA ligase alpha subunit (341 aa).

Glu-256 contributes to the Mg(2+) binding site.

This sequence belongs to the class-II aminoacyl-tRNA synthetase family. Phe-tRNA synthetase alpha subunit type 1 subfamily. As to quaternary structure, tetramer of two alpha and two beta subunits. The cofactor is Mg(2+).

The protein resides in the cytoplasm. The enzyme catalyses tRNA(Phe) + L-phenylalanine + ATP = L-phenylalanyl-tRNA(Phe) + AMP + diphosphate + H(+). This Leptospira borgpetersenii serovar Hardjo-bovis (strain JB197) protein is Phenylalanine--tRNA ligase alpha subunit.